Here is a 399-residue protein sequence, read N- to C-terminus: S-adenosylmethionine synthase (399 aa).

His17 is an ATP binding site. Asp19 is a binding site for Mg(2+). Residue Glu45 coordinates K(+). Residues Glu58 and Gln101 each contribute to the L-methionine site. The segment at 101 to 111 is flexible loop; the sequence is QSADIAMGVDQ. Residues 177–179, 244–245, Asp253, 259–260, Ala276, and Lys280 each bind ATP; these read DGK, RF, and RK. An L-methionine-binding site is contributed by Asp253. Lys284 contacts L-methionine.

This sequence belongs to the AdoMet synthase family. Homotetramer; dimer of dimers. Requires Mg(2+) as cofactor. K(+) serves as cofactor.

It localises to the cytoplasm. The catalysed reaction is L-methionine + ATP + H2O = S-adenosyl-L-methionine + phosphate + diphosphate. It functions in the pathway amino-acid biosynthesis; S-adenosyl-L-methionine biosynthesis; S-adenosyl-L-methionine from L-methionine: step 1/1. Catalyzes the formation of S-adenosylmethionine (AdoMet) from methionine and ATP. The overall synthetic reaction is composed of two sequential steps, AdoMet formation and the subsequent tripolyphosphate hydrolysis which occurs prior to release of AdoMet from the enzyme. In Bacillus mycoides (strain KBAB4) (Bacillus weihenstephanensis), this protein is S-adenosylmethionine synthase.